Reading from the N-terminus, the 396-residue chain is Putative isochorismate synthase (396 aa).

It belongs to the isochorismate synthase family.

The enzyme catalyses chorismate = isochorismate. The protein operates within siderophore biosynthesis; amonabactin biosynthesis. Its function is as follows. Involved in the synthesis of amonabactin, a phenolate siderophore containing 2,3-dihydroxybenzoic acid (2,3-DHB). This is Putative isochorismate synthase (amoA) from Aeromonas hydrophila.